A 168-amino-acid chain; its full sequence is Peptide methionine sulfoxide reductase MsrA 2 (168 aa).

Residue Cys11 is part of the active site.

Belongs to the MsrA Met sulfoxide reductase family.

It catalyses the reaction L-methionyl-[protein] + [thioredoxin]-disulfide + H2O = L-methionyl-(S)-S-oxide-[protein] + [thioredoxin]-dithiol. The enzyme catalyses [thioredoxin]-disulfide + L-methionine + H2O = L-methionine (S)-S-oxide + [thioredoxin]-dithiol. In terms of biological role, has an important function as a repair enzyme for proteins that have been inactivated by oxidation. Catalyzes the reversible oxidation-reduction of methionine sulfoxide in proteins to methionine. The protein is Peptide methionine sulfoxide reductase MsrA 2 of Rhodopirellula baltica (strain DSM 10527 / NCIMB 13988 / SH1).